The following is a 324-amino-acid chain: NADH-ubiquinone oxidoreductase chain 1 (324 aa).

The next 8 membrane-spanning stretches (helical) occupy residues 9 to 29 (LINPLAYIVPVLLAVAFLTLI), 75 to 95 (FLFLAAPVLALTLAMTLWAPM), 106 to 126 (LGILFILALSSLAVYSILGSG), 146 to 166 (ISYEVSLGLILLSVIIFSGGY), 177 to 197 (SIWLLIPAWPLAAMWYISTLA), 228 to 248 (LFFLAEYANILLMNTLSAVLF), 259 to 279 (ELTTINLMTKAALLSILFLWV), and 299 to 319 (FLPLTLAFVLWHTALPIALAG).

This sequence belongs to the complex I subunit 1 family.

It is found in the mitochondrion inner membrane. It carries out the reaction a ubiquinone + NADH + 5 H(+)(in) = a ubiquinol + NAD(+) + 4 H(+)(out). Its function is as follows. Core subunit of the mitochondrial membrane respiratory chain NADH dehydrogenase (Complex I) that is believed to belong to the minimal assembly required for catalysis. Complex I functions in the transfer of electrons from NADH to the respiratory chain. The immediate electron acceptor for the enzyme is believed to be ubiquinone. The polypeptide is NADH-ubiquinone oxidoreductase chain 1 (MT-ND1) (Carassius auratus (Goldfish)).